Reading from the N-terminus, the 308-residue chain is MQEIESLHQSVLLQEVLQAFMPLEEGVLIDCTLGLGGHSKALLSQKPHLKLIGIDKDKFAQEIAKERLKAFEGRYNLLSGGFAKRFKEALETHNKEIKGVLVDLGVSSLQLDDDNRGFNFHSHTLDMRMDLESELNAQKVINSYPIVALEKIFRDYGEIKEYKKIAHKIAERRAKKPFKNAKDLSEFLSSFSKNKKIHPATLVFQAVRIEVNSELEELKEFLQCARNLKGAILCVISFHSLEDALVKNAFKDYAKNCICDPSSFKCACSNNHALGEILTKKPITPSPEEIKNNRRSRSAKMRVFQFKP.

Residues 36–38 (GGH), D55, F82, D103, and Q110 contribute to the S-adenosyl-L-methionine site.

It belongs to the methyltransferase superfamily. RsmH family.

The protein localises to the cytoplasm. It catalyses the reaction cytidine(1402) in 16S rRNA + S-adenosyl-L-methionine = N(4)-methylcytidine(1402) in 16S rRNA + S-adenosyl-L-homocysteine + H(+). Its function is as follows. Specifically methylates the N4 position of cytidine in position 1402 (C1402) of 16S rRNA. In Helicobacter pylori (strain ATCC 700392 / 26695) (Campylobacter pylori), this protein is Ribosomal RNA small subunit methyltransferase H.